We begin with the raw amino-acid sequence, 490 residues long: Betaine aldehyde dehydrogenase (490 aa).

A K(+)-binding site is contributed by D93. 150–152 contacts NAD(+); it reads GAW. K162 functions as the Charge relay system in the catalytic mechanism. 176–179 contributes to the NAD(+) binding site; the sequence is KPSE. Residue V180 coordinates K(+). An NAD(+)-binding site is contributed by 230 to 233; it reads GIAS. K(+) is bound at residue L246. E252 functions as the Proton acceptor in the catalytic mechanism. NAD(+)-binding residues include G254, C286, and E387. The active-site Nucleophile is the C286. The residue at position 286 (C286) is a Cysteine sulfenic acid (-SOH). Positions 457 and 460 each coordinate K(+). E464 functions as the Charge relay system in the catalytic mechanism.

The protein belongs to the aldehyde dehydrogenase family. Dimer of dimers. It depends on K(+) as a cofactor.

The catalysed reaction is betaine aldehyde + NAD(+) + H2O = glycine betaine + NADH + 2 H(+). Its pathway is amine and polyamine biosynthesis; betaine biosynthesis via choline pathway; betaine from betaine aldehyde: step 1/1. In terms of biological role, involved in the biosynthesis of the osmoprotectant glycine betaine. Catalyzes the irreversible oxidation of betaine aldehyde to the corresponding acid. The chain is Betaine aldehyde dehydrogenase from Yersinia pseudotuberculosis serotype I (strain IP32953).